The chain runs to 308 residues: F-actin-capping protein subunit alpha (308 aa).

Belongs to the F-actin-capping protein alpha subunit family. Component of the F-actin capping complex, composed of a heterodimer of an alpha and a beta subunit.

Its function is as follows. F-actin-capping proteins bind in a Ca(2+)-independent manner to the fast growing ends of actin filaments (barbed end) thereby blocking the exchange of subunits at these ends. Unlike other capping proteins (such as gelsolin and severin), these proteins do not sever actin filaments. In Arabidopsis thaliana (Mouse-ear cress), this protein is F-actin-capping protein subunit alpha.